The sequence spans 101 residues: Small ribosomal subunit protein uS14 (101 aa).

The protein belongs to the universal ribosomal protein uS14 family. As to quaternary structure, part of the 30S ribosomal subunit. Contacts proteins S3 and S10.

Its function is as follows. Binds 16S rRNA, required for the assembly of 30S particles and may also be responsible for determining the conformation of the 16S rRNA at the A site. The polypeptide is Small ribosomal subunit protein uS14 (Hydrogenovibrio crunogenus (strain DSM 25203 / XCL-2) (Thiomicrospira crunogena)).